The sequence spans 217 residues: N-(5'-phosphoribosyl)anthranilate isomerase (217 aa).

Belongs to the TrpF family.

It catalyses the reaction N-(5-phospho-beta-D-ribosyl)anthranilate = 1-(2-carboxyphenylamino)-1-deoxy-D-ribulose 5-phosphate. Its pathway is amino-acid biosynthesis; L-tryptophan biosynthesis; L-tryptophan from chorismate: step 3/5. The chain is N-(5'-phosphoribosyl)anthranilate isomerase from Chlorobium chlorochromatii (strain CaD3).